The primary structure comprises 107 residues: MKWIVIDTVIQPTCGISFSAIWGDMKMIIWYQPTIFLTPGSIFTPVKSGIIFKDKEYPITIYNITPFNKDLWSLLKSSQECPPGESEITNKCLHNSCIIKICPYGLK.

This sequence belongs to the IraM/RssC family.

Its subcellular location is the cytoplasm. In terms of biological role, inhibits RpoS proteolysis by regulating RssB activity, thereby increasing the stability of the sigma stress factor RpoS during magnesium starvation. The protein is Anti-adapter protein IraM of Escherichia coli O17:K52:H18 (strain UMN026 / ExPEC).